An 883-amino-acid chain; its full sequence is NF-X1-type zinc finger protein NFXL2 (883 aa).

Polar residues predominate over residues 1 to 10 (MTNMAGTATT). The disordered stretch occupies residues 1-44 (MTNMAGTATTEFRWKSPPQPPSQEQPISDSDSDSGSDSENHQHR). Residues 87 to 152 (CLICLERIKR…EAVWNCPKCR (66 aa)) form an RING-type; degenerate zinc finger. 11 consecutive NF-X1-type zinc fingers follow at residues 198 to 216 (CGHCCLLLCHPGPCASCPK), 250 to 269 (CNIHNCREICHDGECPPCRE), 303 to 322 (CGKHVCERGCHAGECGLCPY), 357 to 377 (CGYHRCPERCHRGPCLETCRI), 410 to 429 (CARHACRRRCCDGECPPCSE), 437 to 456 (CRNHKCQSPCHQGPCAPCPI), 494 to 515 (CRHGQNQKPHKCHYGACPPCRL), 523 to 568 (CGHK…RCPE), 605 to 636 (CGNHYCSYFCHALDIRSSSLDKRSESCEKCDL), 646 to 664 (CQHPCPRRCHPEDCPPCKT), and 709 to 738 (CTHLCPEICHPGQCPLPEKCGKKVVVRCKC). The segment at 798-824 (EIEEKEEPSGKNASKRRKRRGRGQDIQ) is disordered. A helical transmembrane segment spans residues 841-863 (MVVMLVAMLAAVSYYGYKGLLWL).

The protein belongs to the NFX1 family. As to quaternary structure, interacts with ADO1/ZTL. In terms of tissue distribution, constitutively expressed in mesophyll and guard cells.

The protein resides in the nucleus. It is found in the membrane. The protein operates within protein modification; protein ubiquitination. In terms of biological role, probable transcriptional regulator. May mediate E2- or E3-dependent ubiquitination. Required to gate light sensitivity during the night. Regulates the speed of the clock by acting in the feedback loop between CCA1, LHY and APRR1/TOC1. Promotes the expression of CCA1 at night but not by days. This activational effect is enhanced by interaction with ADO1/ZTL. Association with ADO1/ZTL is not leading to the degradation of NFXL2. Confers sensitivity to osmotic stress such as high salinity. Prevents H(2)O(2) production and abscisic acid accumulation. Part of a regulatory network that integrates the biosynthesis and action of abscisic acid, reactive oxygen species and cuticle components. The sequence is that of NF-X1-type zinc finger protein NFXL2 (NFXL2) from Arabidopsis thaliana (Mouse-ear cress).